The following is a 230-amino-acid chain: Orotidine 5'-phosphate decarboxylase (230 aa).

Substrate-binding positions include Asp11, Lys34, Asp61–Thr70, Thr117, Arg179, Gln188, Gly208, and Arg209. The active-site Proton donor is Lys63.

The protein belongs to the OMP decarboxylase family. Type 1 subfamily. Homodimer.

The catalysed reaction is orotidine 5'-phosphate + H(+) = UMP + CO2. It functions in the pathway pyrimidine metabolism; UMP biosynthesis via de novo pathway; UMP from orotate: step 2/2. In terms of biological role, catalyzes the decarboxylation of orotidine 5'-monophosphate (OMP) to uridine 5'-monophosphate (UMP). This Streptococcus pyogenes serotype M6 (strain ATCC BAA-946 / MGAS10394) protein is Orotidine 5'-phosphate decarboxylase.